Here is a 164-residue protein sequence, read N- to C-terminus: Galectin-3 (164 aa).

Positions 9–154 (STVDLSEPLK…FSDVLGVTVL (146 aa)) constitute a Galectin domain. A carbohydrate-binding residues include Asn45, Arg64, Asn73, Arg81, Glu84, and Asn138.

In terms of assembly, homotetramer. Oligomerization is required for carbohydrate binding.

It localises to the secreted. The protein localises to the extracellular space. It is found in the extracellular matrix. The protein resides in the cell wall. In terms of biological role, binds complex carbohydrates, such as chitooligosaccharides. Does not bind lactose. May play a role in fruiting body formation. The chain is Galectin-3 (Cgl3) from Coprinopsis cinerea (Inky cap fungus).